The primary structure comprises 275 residues: Chemotaxis protein methyltransferase 1 (275 aa).

The region spanning 1–275 (MTAITISDQE…CNPGIIYKLK (275 aa)) is the CheR-type methyltransferase domain. S-adenosyl-L-methionine contacts are provided by residues Asn-76, Thr-78, Arg-82, Glu-117, Asp-145, 201 to 202 (NL), and 218 to 219 (RN).

The enzyme catalyses L-glutamyl-[protein] + S-adenosyl-L-methionine = [protein]-L-glutamate 5-O-methyl ester + S-adenosyl-L-homocysteine. Functionally, methylation of the membrane-bound methyl-accepting chemotaxis proteins (MCP) to form gamma-glutamyl methyl ester residues in MCP. This is Chemotaxis protein methyltransferase 1 (cheR1) from Vibrio cholerae serotype O1 (strain ATCC 39315 / El Tor Inaba N16961).